We begin with the raw amino-acid sequence, 386 residues long: MKRINKDYLYKLTNNYIKNIDISIKDHYINEYNNKGTKLQRINKINSWDNQLYKFNKKNVINTWILDRLVSKLLIKIFKVRVNIINNNIINNGQIKDIYINKPKFKHTINKVYINFNYILSSNNITINDIDNNMNKYYTSIINDINNILGISNNNNNNIINKDNISNYLSKLYNKKVIIESNRLIYHYNDNTILNKMIINNMEKHKGGLSGKYSKILRTNIPVNNSILIRNKYISSIINNNYIKLNHIINLTSYNNLNILNIYNTLNLNKISKDLLINKYIIGLNVLYKGKNLNTAGISRSIKDRLLLGSLSNKLYGKYSNFLSSSLINNNNNNLKLGSSNINTNLNINKSYKLNYIPNHHNIITNNKVNKVKTGTFGITTKLNTI.

This sequence belongs to the universal ribosomal protein uS3 family.

Its subcellular location is the mitochondrion. Functionally, essential for mitochondrial protein synthesis and required for the maturation of small ribosomal subunits. The sequence is that of Small ribosomal subunit protein uS3m (VAR1) from Wickerhamomyces canadensis (Yeast).